Reading from the N-terminus, the 401-residue chain is Mitochondrial distribution and morphology protein 12 (401 aa).

In terms of domain architecture, SMP-LTD spans 1 to 401 (MSIDINWDTL…VYPSFWTFLV (401 aa)). Acidic residues predominate over residues 70–88 (YEEDEDYPDNEDDDDDEAG). Disordered regions lie at residues 70 to 95 (YEED…NPRN) and 190 to 247 (SLTL…EKSP). Positions 195–205 (PQSHPDPSSRP) are enriched in low complexity. Over residues 209-220 (HQHDDERRRSLA) the composition is skewed to basic and acidic residues.

Belongs to the MDM12 family. Component of the ER-mitochondria encounter structure (ERMES) or MDM complex, composed of MMM1, MDM10, MDM12 and MDM34. An MMM1 homodimer associates with one molecule of MDM12 on each side in a pairwise head-to-tail manner, and the SMP-LTD domains of MMM1 and MDM12 generate a continuous hydrophobic tunnel for phospholipid trafficking.

The protein resides in the mitochondrion outer membrane. It is found in the endoplasmic reticulum membrane. Functionally, component of the ERMES/MDM complex, which serves as a molecular tether to connect the endoplasmic reticulum (ER) and mitochondria. Components of this complex are involved in the control of mitochondrial shape and protein biogenesis, and function in nonvesicular lipid trafficking between the ER and mitochondria. MDM12 is required for the interaction of the ER-resident membrane protein MMM1 and the outer mitochondrial membrane-resident beta-barrel protein MDM10. The MDM12-MMM1 subcomplex functions in the major beta-barrel assembly pathway that is responsible for biogenesis of all mitochondrial outer membrane beta-barrel proteins, and acts in a late step after the SAM complex. The MDM10-MDM12-MMM1 subcomplex further acts in the TOM40-specific pathway after the action of the MDM12-MMM1 complex. Essential for establishing and maintaining the structure of mitochondria and maintenance of mtDNA nucleoids. The sequence is that of Mitochondrial distribution and morphology protein 12 from Phaeosphaeria nodorum (strain SN15 / ATCC MYA-4574 / FGSC 10173) (Glume blotch fungus).